The following is a 463-amino-acid chain: Hydrolase pyiE (463 aa).

Serine 252 serves as the catalytic Nucleophile. The tract at residues 350-373 is disordered; it reads KSDGSRANGKKSHSPTDGGGVESD.

It belongs to the AB hydrolase superfamily. FUS2 hydrolase family. As to quaternary structure, homodimer.

Its pathway is mycotoxin biosynthesis. In terms of biological role, hydrolyase; part of the gene cluster that mediates the biosynthesis of the mycotoxin pyrichalasin H, a tyrosine-derived cytochalasan that inhibits the growth of rice seedlings, but also inhibits lymphocyte capping and actin polymerization and alters cell morphology. Pyrichalasin H is indicated as the responsible agent for the genus-specific pathogenicity of M.grisea toward crabgrass. The first step in the pathway is catalyzed by the O-methyltransferase pyiA which methylates free tyrosine to generate the precursor O-methyltyrosine. The hybrid PKS-NRPS pyiS, assisted by the enoyl reductase pyiC, are responsible for fusion of the O-methyltyrosine precursor and the polyketide backbone. The polyketide synthase module (PKS) of pyiS is responsible for the synthesis of the polyketide backbone and the downstream nonribosomal peptide synthetase (NRPS) amidates the carboxyl end of the polyketide with the O-methyltyrosine precursor. As the NRPS A-domain demonstrates substrate tolerance, pyiS can also use phenylalanine, tyrosine and even para-chlorophenylalanine as amino acid precursor, which leads to the production of novel cytochalasans, including halogenated cytochalasans. Because pyiS lacks a designated enoylreductase (ER) domain, the required activity is provided the enoyl reductase pyiC. Reduction by the hydrolyase pyiE leads to 1,5-dihydropyrrolone, which is substrate for dehydration and intra-molecular Diels-Alder cyclization by the Diels-Alderase pyiF to yield the required isoindolone-fused macrocycle. The tailoring cytochrome P450 monooxygenases piyD and piyG catalyze the hydroxylation at C-18 and C-7, respectivily, whereas the short-chain dehydrogenase/reductase pyiH reduces the carbonyl at C-21 in preparation for the transfer of an acetyl group by the acetyltransferase pyiB. These 3 reactions whose order is not clear yet, lead to the production of O-methylpyrichalasin J, a deacetylated pyrichalasin H. Finally, pyiB to converts O-methylpyrichalasin J into the final product pyrichalasin H via acetylation of C-21. This chain is Hydrolase pyiE, found in Pyricularia grisea (Crabgrass-specific blast fungus).